The following is a 209-amino-acid chain: tRNA (guanine-N(7)-)-methyltransferase (209 aa).

The S-adenosyl-L-methionine site is built by Asp35, Glu60, Asn87, and Asp113. Asp113 is an active-site residue. The substrate site is built by Lys117 and Asp149.

The protein belongs to the class I-like SAM-binding methyltransferase superfamily. TrmB family.

It catalyses the reaction guanosine(46) in tRNA + S-adenosyl-L-methionine = N(7)-methylguanosine(46) in tRNA + S-adenosyl-L-homocysteine. The protein operates within tRNA modification; N(7)-methylguanine-tRNA biosynthesis. Catalyzes the formation of N(7)-methylguanine at position 46 (m7G46) in tRNA. The polypeptide is tRNA (guanine-N(7)-)-methyltransferase (Prochlorococcus marinus (strain MIT 9515)).